A 61-amino-acid polypeptide reads, in one-letter code: Large ribosomal subunit protein uL30 (61 aa).

Belongs to the universal ribosomal protein uL30 family. In terms of assembly, part of the 50S ribosomal subunit.

The sequence is that of Large ribosomal subunit protein uL30 from Chlorobium phaeobacteroides (strain DSM 266 / SMG 266 / 2430).